A 355-amino-acid chain; its full sequence is Class E basic helix-loop-helix protein 22 (355 aa).

Disordered regions lie at residues 34-90 (AFRS…GGGG) and 128-215 (GRGS…KEQK). 2 stretches are compositionally biased toward gly residues: residues 81–90 (GGGGASGGGG) and 185–207 (GGSG…GGGS). One can recognise a bHLH domain in the interval 216–270 (ALRLNINARERRRMHDLNDALDELRAVIPYAHSPSVRKLSKIATLLLAKNYILMQ).

In terms of assembly, interacts with PRDM8. Brain-specific, with the highest expression in the cerebellum.

The protein resides in the nucleus. Its function is as follows. Inhibits DNA binding of TCF3/E47 homodimers and TCF3 (E47)/NEUROD1 heterodimers and acts as a strong repressor of Neurod1 and Myod-responsive genes, probably by heterodimerization with class a basic helix-loop-helix factors. Despite the presence of an intact basic domain, does not bind to DNA. In the brain, may function as an area-specific transcription factor that regulates the postmitotic acquisition of area identities and elucidate the genetic hierarchy between progenitors and postmitotic neurons driving neocortical arealization. May be required for the survival of a specific population of inhibitory neurons in the superficial laminae of the spinal cord dorsal horn that may regulate pruritis. Seems to play a crucial role in the retinogenesis, in the specification of amacrine and bipolar subtypes. Forms with PRDM8 a transcriptional repressor complex controlling genes involved in neural development and neuronal differentiation. The chain is Class E basic helix-loop-helix protein 22 (Bhlhe22) from Mus musculus (Mouse).